Consider the following 275-residue polypeptide: Large ribosomal subunit protein uL2 (275 aa).

A disordered region spans residues 223 to 275 (VAMNPVDHPHGGGEGRTGEGRVPVSPWGTPAKGYRTRNNKRTDNMIVRRRHSK). Basic and acidic residues predominate over residues 229–241 (DHPHGGGEGRTGE).

The protein belongs to the universal ribosomal protein uL2 family. Part of the 50S ribosomal subunit. Forms a bridge to the 30S subunit in the 70S ribosome.

In terms of biological role, one of the primary rRNA binding proteins. Required for association of the 30S and 50S subunits to form the 70S ribosome, for tRNA binding and peptide bond formation. It has been suggested to have peptidyltransferase activity; this is somewhat controversial. Makes several contacts with the 16S rRNA in the 70S ribosome. This chain is Large ribosomal subunit protein uL2, found in Laribacter hongkongensis (strain HLHK9).